Here is a 187-residue protein sequence, read N- to C-terminus: MTKLENPVLMATIGAAQGLRGEVRVKSFTDDPTALGDYGNLHSEDGRVFEVLEVRETKNVVIVRFRGINDRSAAEALNGLELFIERDNLPDDDLDEDEFFYADLEGLEAVDGTGKSYGSVTGVFDFGAGDLLELKGPGRRPVLIPFTEWSVLEIDLEAGKLLVDPVAAGLVEDKDESLDKQFPTKRK.

One can recognise a PRC barrel domain in the interval 95 to 178; sequence DEDEFFYADL…GLVEDKDESL (84 aa).

This sequence belongs to the RimM family. In terms of assembly, binds ribosomal protein uS19.

Its subcellular location is the cytoplasm. Its function is as follows. An accessory protein needed during the final step in the assembly of 30S ribosomal subunit, possibly for assembly of the head region. Essential for efficient processing of 16S rRNA. May be needed both before and after RbfA during the maturation of 16S rRNA. It has affinity for free ribosomal 30S subunits but not for 70S ribosomes. The polypeptide is Ribosome maturation factor RimM (Sinorhizobium fredii (strain NBRC 101917 / NGR234)).